The following is an 85-amino-acid chain: Cell division protein ZapA (85 aa).

The stretch at 59–85 (TAVNVVHDYMKLQEKYEILERQLKEKE) forms a coiled coil.

It belongs to the ZapA family. Type 2 subfamily. As to quaternary structure, homodimer. Interacts with FtsZ.

It is found in the cytoplasm. In terms of biological role, activator of cell division through the inhibition of FtsZ GTPase activity, therefore promoting FtsZ assembly into bundles of protofilaments necessary for the formation of the division Z ring. It is recruited early at mid-cell but it is not essential for cell division. This Bacillus velezensis (strain DSM 23117 / BGSC 10A6 / LMG 26770 / FZB42) (Bacillus amyloliquefaciens subsp. plantarum) protein is Cell division protein ZapA.